A 245-amino-acid polypeptide reads, in one-letter code: Folate receptor gamma (245 aa).

Positions 1–22 (MDMAWQMMQLLLLALVTAAGSA) are cleaved as a signal peptide. Intrachain disulfides connect cysteine 37–cysteine 65, cysteine 57–cysteine 105, cysteine 66–cysteine 109, cysteine 89–cysteine 175, cysteine 96–cysteine 146, cysteine 135–cysteine 209, cysteine 139–cysteine 189, and cysteine 152–cysteine 169. Folate contacts are provided by aspartate 103 and tyrosine 107. Residue asparagine 121 is glycosylated (N-linked (GlcNAc...) asparagine). Residues 124-128 (WRKER), 157-162 (HKGWNW), and serine 196 each bind folate. Asparagine 161 carries an N-linked (GlcNAc...) asparagine glycan. Asparagine 201 is a glycosylation site (N-linked (GlcNAc...) asparagine).

It belongs to the folate receptor family. In terms of tissue distribution, spleen, thymus, bone marrow, ovarian carcinoma, and uterine carcinoma.

The protein resides in the secreted. Functionally, binds to folate and reduced folic acid derivatives and mediates delivery of 5-methyltetrahydrofolate to the interior of cells. Isoform Short does not bind folate. In Homo sapiens (Human), this protein is Folate receptor gamma (FOLR3).